The sequence spans 96 residues: Large ribosomal subunit protein uL23 (96 aa).

Belongs to the universal ribosomal protein uL23 family. Part of the 50S ribosomal subunit. Contacts protein L29, and trigger factor when it is bound to the ribosome.

Functionally, one of the early assembly proteins it binds 23S rRNA. One of the proteins that surrounds the polypeptide exit tunnel on the outside of the ribosome. Forms the main docking site for trigger factor binding to the ribosome. The chain is Large ribosomal subunit protein uL23 from Caldicellulosiruptor bescii (strain ATCC BAA-1888 / DSM 6725 / KCTC 15123 / Z-1320) (Anaerocellum thermophilum).